The primary structure comprises 99 residues: Large ribosomal subunit protein uL23 (99 aa).

Belongs to the universal ribosomal protein uL23 family. In terms of assembly, part of the 50S ribosomal subunit. Contacts protein L29, and trigger factor when it is bound to the ribosome.

One of the early assembly proteins it binds 23S rRNA. One of the proteins that surrounds the polypeptide exit tunnel on the outside of the ribosome. Forms the main docking site for trigger factor binding to the ribosome. The sequence is that of Large ribosomal subunit protein uL23 from Lachnoclostridium phytofermentans (strain ATCC 700394 / DSM 18823 / ISDg) (Clostridium phytofermentans).